The following is a 102-amino-acid chain: Protein RnfH (102 aa).

The protein belongs to the UPF0125 (RnfH) family.

This is Protein RnfH from Haemophilus influenzae (strain 86-028NP).